We begin with the raw amino-acid sequence, 152 residues long: Transcriptional repressor NrdR (152 aa).

A zinc finger lies at 3-34 (CAFCGNPDTQVIDSRVSEDGSSIRRRRRCPAC). One can recognise an ATP-cone domain in the interval 49-139 (PQVVKTAGHR…VYRSFQDISE (91 aa)).

This sequence belongs to the NrdR family. Requires Zn(2+) as cofactor.

In terms of biological role, negatively regulates transcription of bacterial ribonucleotide reductase nrd genes and operons by binding to NrdR-boxes. This Chromobacterium violaceum (strain ATCC 12472 / DSM 30191 / JCM 1249 / CCUG 213 / NBRC 12614 / NCIMB 9131 / NCTC 9757 / MK) protein is Transcriptional repressor NrdR.